The primary structure comprises 176 residues: MRRTTKETDIIVEIGKKGEIKTNDLILDHMLTAFAFYLGKDMRITATYDLRHHLWEDIGITLGEALRENLPEKFTRFGNAIMPMDDALVLVSVDISNRPYANVDVNIKDAEEGFAVSLLKEFVWGLARGLRATIHIKQLSGENAHHIVEAAFKGLGMALRVATKESERVESTKGVL.

The protein belongs to the imidazoleglycerol-phosphate dehydratase family.

It localises to the cytoplasm. It carries out the reaction D-erythro-1-(imidazol-4-yl)glycerol 3-phosphate = 3-(imidazol-4-yl)-2-oxopropyl phosphate + H2O. Its pathway is amino-acid biosynthesis; L-histidine biosynthesis; L-histidine from 5-phospho-alpha-D-ribose 1-diphosphate: step 6/9. The polypeptide is Imidazoleglycerol-phosphate dehydratase (Pyrococcus furiosus (strain ATCC 43587 / DSM 3638 / JCM 8422 / Vc1)).